A 465-amino-acid polypeptide reads, in one-letter code: Probable dipeptidase A (465 aa).

Cysteine 3 is an active-site residue.

Belongs to the peptidase C69 family.

The enzyme catalyses an L-aminoacyl-L-amino acid + H2O = 2 an L-alpha-amino acid. The sequence is that of Probable dipeptidase A (pepDA) from Streptococcus pyogenes serotype M3 (strain SSI-1).